The primary structure comprises 128 residues: Phosphoribosyl-AMP cyclohydrolase (128 aa).

D86 serves as a coordination point for Mg(2+). Residue C87 participates in Zn(2+) binding. Residues D88 and D90 each contribute to the Mg(2+) site. C103 and C110 together coordinate Zn(2+).

The protein belongs to the PRA-CH family. As to quaternary structure, homodimer. Mg(2+) is required as a cofactor. The cofactor is Zn(2+).

Its subcellular location is the cytoplasm. It catalyses the reaction 1-(5-phospho-beta-D-ribosyl)-5'-AMP + H2O = 1-(5-phospho-beta-D-ribosyl)-5-[(5-phospho-beta-D-ribosylamino)methylideneamino]imidazole-4-carboxamide. It functions in the pathway amino-acid biosynthesis; L-histidine biosynthesis; L-histidine from 5-phospho-alpha-D-ribose 1-diphosphate: step 3/9. Functionally, catalyzes the hydrolysis of the adenine ring of phosphoribosyl-AMP. This is Phosphoribosyl-AMP cyclohydrolase from Roseobacter denitrificans (strain ATCC 33942 / OCh 114) (Erythrobacter sp. (strain OCh 114)).